A 371-amino-acid polypeptide reads, in one-letter code: Protein disulfide isomerase-like 2-2 (371 aa).

An N-terminal signal peptide occupies residues 1–27 (MAIPRISPRKTLPLFAALALALAWAFA). Thioredoxin domains lie at 28-143 (APAF…TEGG) and 147-262 (KLAT…EKCG). Active-site nucleophile residues include Cys64, Cys67, Cys183, and Cys186. Intrachain disulfides connect Cys64–Cys67 and Cys183–Cys186.

Belongs to the protein disulfide isomerase family.

It is found in the secreted. It catalyses the reaction Catalyzes the rearrangement of -S-S- bonds in proteins.. Acts as a protein-folding catalyst that interacts with nascent polypeptides to catalyze the formation, isomerization, and reduction or oxidation of disulfide bonds. May play a role in storage protein biogenesis. In Oryza sativa subsp. japonica (Rice), this protein is Protein disulfide isomerase-like 2-2 (PDIL2-2).